A 199-amino-acid polypeptide reads, in one-letter code: MKDNEVFIIGLGNPGKQYIKSRHNIGFLLLETFSKKYDAQFTLKNKLKSRYTEFKINDSIYKLFMPHTYMNNSGDAVKAIVDWYKISLDKVFIIVDDIDLPLGKIRFRKKGSSGGHNGLKDIINKLQTENFNRIKIGIGSPPINETKKQLNTISHVLGNISSQENSTLEKVYQKVIESLEELDIKNEDYIISELNSFHK.

Tyr-18 is a tRNA binding site. His-23 serves as the catalytic Proton acceptor. Residues Tyr-69, Asn-71, and Asn-117 each coordinate tRNA.

It belongs to the PTH family. Monomer.

The protein resides in the cytoplasm. The catalysed reaction is an N-acyl-L-alpha-aminoacyl-tRNA + H2O = an N-acyl-L-amino acid + a tRNA + H(+). Hydrolyzes ribosome-free peptidyl-tRNAs (with 1 or more amino acids incorporated), which drop off the ribosome during protein synthesis, or as a result of ribosome stalling. In terms of biological role, catalyzes the release of premature peptidyl moieties from peptidyl-tRNA molecules trapped in stalled 50S ribosomal subunits, and thus maintains levels of free tRNAs and 50S ribosomes. The protein is Peptidyl-tRNA hydrolase of Prochlorococcus marinus (strain MIT 9515).